A 216-amino-acid chain; its full sequence is Protein-L-isoaspartate O-methyltransferase (216 aa).

Residue Ser-61 is part of the active site.

It belongs to the methyltransferase superfamily. L-isoaspartyl/D-aspartyl protein methyltransferase family.

The protein localises to the cytoplasm. It carries out the reaction [protein]-L-isoaspartate + S-adenosyl-L-methionine = [protein]-L-isoaspartate alpha-methyl ester + S-adenosyl-L-homocysteine. In terms of biological role, catalyzes the methyl esterification of L-isoaspartyl residues in peptides and proteins that result from spontaneous decomposition of normal L-aspartyl and L-asparaginyl residues. It plays a role in the repair and/or degradation of damaged proteins. The polypeptide is Protein-L-isoaspartate O-methyltransferase (pcm) (Pyrococcus abyssi (strain GE5 / Orsay)).